The following is a 156-amino-acid chain: MNITVLAVGTKMPRWVDEAVAEYAKRFGRDVAYVLKEIKPEKRGAGVNAAQGMAAEEKRILEAIPQGAFLVVLDERGKAPTSVELAEHLKTWQQNGEHVCFVIGGADGMTDRLKQQARMMMRLSSLTLPHGMVRVLLTEQLYRAASILHNHPYHRE.

S-adenosyl-L-methionine is bound by residues Leu-73, Gly-104, and 123 to 128 (LSSLTL).

This sequence belongs to the RNA methyltransferase RlmH family. As to quaternary structure, homodimer.

It is found in the cytoplasm. The enzyme catalyses pseudouridine(1915) in 23S rRNA + S-adenosyl-L-methionine = N(3)-methylpseudouridine(1915) in 23S rRNA + S-adenosyl-L-homocysteine + H(+). Specifically methylates the pseudouridine at position 1915 (m3Psi1915) in 23S rRNA. The sequence is that of Ribosomal RNA large subunit methyltransferase H from Neisseria meningitidis serogroup C / serotype 2a (strain ATCC 700532 / DSM 15464 / FAM18).